The sequence spans 177 residues: MGKIIFYEDRNFQGRSYECSNDNPDLQPNFNACNSVRVENGCWMIYERPNYMGHQYFLKRGEYPDYQQCQGLNDSPQSSRLLSQNLGIGTNKLRVYERGDSKGEMMEFLEDCPNVYDRFCSHEIHSCNVLDGYWIFYELPNYKGKQYLLRPGEYKRFTDWGSQTAKVGSFRRVIGIC.

Beta/gamma crystallin 'Greek key' domains are found at residues 2 to 40 (GKII…RVEN) and 41 to 83 (GCWM…RLLS). Residues 84-90 (QNLGIGT) form a connecting peptide region. 2 Beta/gamma crystallin 'Greek key' domains span residues 91–131 (NKLR…NVLD) and 132–174 (GYWI…RRVI).

Belongs to the beta/gamma-crystallin family. As to quaternary structure, monomer.

Functionally, crystallins are the dominant structural components of the vertebrate eye lens. The protein is Gamma-crystallin M1-2 of Aquarana catesbeiana (American bullfrog).